A 308-amino-acid polypeptide reads, in one-letter code: uncharacterized protein (308 aa).

This is an uncharacterized protein from Methanocaldococcus jannaschii (strain ATCC 43067 / DSM 2661 / JAL-1 / JCM 10045 / NBRC 100440) (Methanococcus jannaschii).